The primary structure comprises 263 residues: Endonuclease 8 (263 aa).

Pro2 functions as the Schiff-base intermediate with DNA in the catalytic mechanism. Glu3 (proton donor) is an active-site residue. Lys53 serves as the catalytic Proton donor; for beta-elimination activity. Residues Gln70, Arg125, and Asn169 each contribute to the DNA site. The segment at 229 to 263 (KVFHRDGELCERCGGIIEKTTLSSRPFYWCPGCQH) adopts an FPG-type zinc-finger fold. The active-site Proton donor; for delta-elimination activity is Arg253.

It belongs to the FPG family. It depends on Zn(2+) as a cofactor.

It catalyses the reaction 2'-deoxyribonucleotide-(2'-deoxyribose 5'-phosphate)-2'-deoxyribonucleotide-DNA = a 3'-end 2'-deoxyribonucleotide-(2,3-dehydro-2,3-deoxyribose 5'-phosphate)-DNA + a 5'-end 5'-phospho-2'-deoxyribonucleoside-DNA + H(+). Involved in base excision repair of DNA damaged by oxidation or by mutagenic agents. Acts as a DNA glycosylase that recognizes and removes damaged bases. Has a preference for oxidized pyrimidines, such as thymine glycol, 5,6-dihydrouracil and 5,6-dihydrothymine. Has AP (apurinic/apyrimidinic) lyase activity and introduces nicks in the DNA strand. Cleaves the DNA backbone by beta-delta elimination to generate a single-strand break at the site of the removed base with both 3'- and 5'-phosphates. The chain is Endonuclease 8 from Escherichia coli O7:K1 (strain IAI39 / ExPEC).